An 85-amino-acid chain; its full sequence is Large ribosomal subunit protein bL27 (85 aa).

Positions Met1–Leu21 are disordered.

This sequence belongs to the bacterial ribosomal protein bL27 family.

The protein is Large ribosomal subunit protein bL27 of Albidiferax ferrireducens (strain ATCC BAA-621 / DSM 15236 / T118) (Rhodoferax ferrireducens).